Here is a 95-residue protein sequence, read N- to C-terminus: Protein Vpr (95 aa).

The interval 1–42 (MERAPEDAGPQREPYNEWALELLEELKNEAVRHFPRIWLHGL) is homooligomerization. Phosphoserine; by host occurs at positions 79, 93, and 95.

This sequence belongs to the HIV-1 VPR protein family. In terms of assembly, homooligomer, may form homodimer. Interacts with p6-gag region of the Pr55 Gag precursor protein through a (Leu-X-X)4 motif near the C-terminus of the P6gag protein. Interacts with host UNG. May interact with host RAD23A/HHR23A. Interacts with host VPRBP/DCAF1, leading to hijack the CUL4A-RBX1-DDB1-DCAF1/VPRBP complex, mediating ubiquitination of host proteins such as TERT and ZGPAT and arrest of the cell cycle in G2 phase. Post-translationally, phosphorylated on several residues by host. These phosphorylations regulate VPR activity for the nuclear import of the HIV-1 pre-integration complex.

It localises to the virion. The protein resides in the host nucleus. It is found in the host extracellular space. During virus replication, may deplete host UNG protein, and incude G2-M cell cycle arrest. Acts by targeting specific host proteins for degradation by the 26S proteasome, through association with the cellular CUL4A-DDB1 E3 ligase complex by direct interaction with host VPRPB/DCAF-1. Cell cycle arrest reportedly occurs within hours of infection and is not blocked by antiviral agents, suggesting that it is initiated by the VPR carried into the virion. Additionally, VPR induces apoptosis in a cell cycle dependent manner suggesting that these two effects are mechanistically linked. Detected in the serum and cerebrospinal fluid of AIDS patient, VPR may also induce cell death to bystander cells. Its function is as follows. During virus entry, plays a role in the transport of the viral pre-integration (PIC) complex to the host nucleus. This function is crucial for viral infection of non-dividing macrophages. May act directly at the nuclear pore complex, by binding nucleoporins phenylalanine-glycine (FG)-repeat regions. The protein is Protein Vpr of Human immunodeficiency virus type 1 group N (isolate YBF30) (HIV-1).